A 1065-amino-acid chain; its full sequence is MRPELVAVLDRYFSEIISCFFLGWLLNFLLVWFCSTKSTFLLWSVFLYICYYILRIEFAYIVAPFLKTIYTNSSQYHTVDWAYAYTALPKGLWEQITDYNYCYNFPPPRVEGFVSDFSPRFTLKELEIMNEANITPVHTIPKDTLLKRASDYKLAVESKKSILPRVQDLYEMDKWHNLRSKLSKNAPSYVTTSEIAVGAMSGAGNTKLAIPVVEKYTEEVADDRLPDRVRAKADQIMVAAIELVADGFASVNSDVTMAGALYDKRHKTIASSFKGAFASRASGVPSHVIYFPMHRVPACDDPNTTLELSMVSRDSDFDEGYTLANISARTLYVRAKGPEKVTETRHLLKAKTEDVVKARQFASEAQVVFATPRLFPEVNLDNYNLPGPSNAQQTEAITTDRGILFPKPKFKGNEVVLNYTGSGKIRNVGSQRFETKKNATGEQFVRSVDDLGCLSDEDGKDYRYGQGLMEEDVLNVQTNNFAIESATETMRLLFSGYASIPLNVIPGTKITVAYLNELSKHSAVHTGLLNMLSKIPGSLKVKINCQVAPTCGIGLAVSYVEGNESANLGSSLGRLLGIQHYKWNPAIEPYVEFVFKPFSCADWWNMHYLGSFKFAPVVVIQTLSKWLNAPKVDARISFAIYYEPTVVLPKQIATLEHAPAFMFRKEVGTLAFKQGERVAYSFEVNLGKPQTDGKEVTSTFASSYCGLSQYMQSDVILDFTLMSSPMIGGTFSIAYVAGAYIEKVGNMQILDSLPHIDFTFSSGSKSTRSVRFPKEVFGVYQALDRWDLDSARGDDVSGNFVLYQRDAVSSALEGELTFRIAARLSGDISFTGVSAGYPTTITRIGKGKTIGRSLDPEIRKPLRYMLGQAHATPKDFSSVRFVMGHWKYRAGLYPGSKSDEDIHPFSLKMRLDGSKSSENFEIIHSPFVRLLQNCAWMRGTLRFYVVARASSDYMSYRRTSQLTVSAHENSLSSNQFYSGVLTSPSGELSFSREVVGPVDGFASMGWNVRGSKKFYKIHVEMGNVHEYDTVVLYGQFDSNVEFAGQRKGGHYLLEKETPIFKTIKY.

Interacts with the large capsid protein. Interacts with the movement protein (via C-terminus). As to quaternary structure, interacts with the small capsid protein. Homomultimer; assembles as pentons. In terms of assembly, interacts (via C-terminus) with the small capsid protein. Post-translationally, specific enzymatic cleavages by picornain 3C-like protease in vivo yield mature proteins.

It is found in the host endoplasmic reticulum. Its subcellular location is the host cell junction. It localises to the host plasmodesma. The protein localises to the virion. Its function is as follows. Acts as a suppressor of post-transcriptional gene silencing (PTGS), a mechanism of plant viral defense that limits the accumulation of viral RNAs. Binds ssRNA. Functionally, transports the viral genome to neighboring plant cells directly through plasmosdesmata, without any budding. The movement protein allows efficient cell to cell propagation, by bypassing the host cell wall barrier. Acts by forming a tubular structure at the host plasmodesmata, enlarging it enough to allow free passage of virion capsids. Binds to GTP and to single-stranded RNA and single-stranded DNA in a non-sequence-specific manner. Also acts as a suppressor of post-transcriptional gene silencing (PTGS), a mechanism of plant viral defense that limits the accumulation of viral RNAs. In terms of biological role, together with the small capsid protein, forms an icosahedral capsid (T=3) enclosing the viral positive strand RNA genome, with a diameter of approximately 300 Angstroms. The large capsid protein interacts with the viral RNA. Also acts as a suppressor of post-transcriptional gene silencing (PTGS), a mechanism of plant viral defense that limits the accumulation of viral RNAs. Binds ssRNA. Together with the large capsid protein, forms an icosahedral capsid (T=3) enclosing the viral positive strand RNA genome, with a diameter of approximately 300 Angstroms. The capsid is formed from 60 copies each of the large and the small capsid protein. The small capsid protein forms the turrets at the fivefold axes of the viral particle. The chain is RNA2 polyprotein from Broad bean wilt virus 2 (BBWV-2).